The chain runs to 312 residues: MTELETKENKKQIYNFNKLQKRLRRNVGNAIADFNMIEDGDKVMVCLSGGKDSYTLLDILLNLRHNAPVHFDIVAVNLDQKQPGFPEHILPEYLSSIGVEYKIVEENTYGIVKEKIPEGKTTCSLCSRLRRGILYRTATELGATKIALGHHRDDMLETLFLNMFYGGKLKSMPPKLVSDDGKQIVIRPLAYCKEKDIEKYAVAKQFPIIPCNLCGSQPNLQRQVIKEMLQTWDRRYPGRIETMFSAIQNITPSHLCDPNLFDFKNIKRGQLPKGVEGDIAFDKEELPQTPIIDEDTEDFVNNGQLIRFKEVN.

The PP-loop motif motif lies at 48-53 (SGGKDS). Positions 123, 126, and 214 each coordinate [4Fe-4S] cluster.

This sequence belongs to the TtcA family. Homodimer. Mg(2+) serves as cofactor. It depends on [4Fe-4S] cluster as a cofactor.

Its subcellular location is the cytoplasm. The enzyme catalyses cytidine(32) in tRNA + S-sulfanyl-L-cysteinyl-[cysteine desulfurase] + AH2 + ATP = 2-thiocytidine(32) in tRNA + L-cysteinyl-[cysteine desulfurase] + A + AMP + diphosphate + H(+). It participates in tRNA modification. Its function is as follows. Catalyzes the ATP-dependent 2-thiolation of cytidine in position 32 of tRNA, to form 2-thiocytidine (s(2)C32). The sulfur atoms are provided by the cysteine/cysteine desulfurase (IscS) system. This is tRNA-cytidine(32) 2-sulfurtransferase from Mannheimia succiniciproducens (strain KCTC 0769BP / MBEL55E).